Here is a 472-residue protein sequence, read N- to C-terminus: ATP-dependent protease ATPase subunit HslU (472 aa).

Residues isoleucine 20, 62–67, aspartate 285, glutamate 350, and arginine 422 contribute to the ATP site; that span reads GVGKTE.

It belongs to the ClpX chaperone family. HslU subfamily. In terms of assembly, a double ring-shaped homohexamer of HslV is capped on each side by a ring-shaped HslU homohexamer. The assembly of the HslU/HslV complex is dependent on binding of ATP.

The protein localises to the cytoplasm. Its function is as follows. ATPase subunit of a proteasome-like degradation complex; this subunit has chaperone activity. The binding of ATP and its subsequent hydrolysis by HslU are essential for unfolding of protein substrates subsequently hydrolyzed by HslV. HslU recognizes the N-terminal part of its protein substrates and unfolds these before they are guided to HslV for hydrolysis. In Lactiplantibacillus plantarum (strain ATCC BAA-793 / NCIMB 8826 / WCFS1) (Lactobacillus plantarum), this protein is ATP-dependent protease ATPase subunit HslU.